Consider the following 154-residue polypeptide: MFTQANLFLILLLAIALIAKNQSLIIAVSVLLLIKLIGLDQKLFPAIQSKGINWGVTVITIAVLVPIATGEIGFKQLGEAMKSYYAWIALGAGILVALIAKNGITLLAEDPHITTALVFGTILAVALFKGVAVGPLIGAGIAYLVMQAVQHFTS.

Helical transmembrane passes span 8 to 28 (FLIL…IIAV), 54 to 74 (WGVT…EIGF), 87 to 107 (WIAL…ITLL), and 117 to 137 (LVFG…GPLI).

This sequence belongs to the UPF0756 family.

It localises to the cell membrane. The polypeptide is UPF0756 membrane protein BLi03063/BL00400 (Bacillus licheniformis (strain ATCC 14580 / DSM 13 / JCM 2505 / CCUG 7422 / NBRC 12200 / NCIMB 9375 / NCTC 10341 / NRRL NRS-1264 / Gibson 46)).